We begin with the raw amino-acid sequence, 124 residues long: UPF0231 protein Shewmr4_0656 (124 aa).

Belongs to the UPF0231 family.

The polypeptide is UPF0231 protein Shewmr4_0656 (Shewanella sp. (strain MR-4)).